Reading from the N-terminus, the 700-residue chain is Methionine--tRNA ligase (700 aa).

The 'HIGH' region signature appears at 13 to 23 (PYANGDIHLGH). Zn(2+) is bound by residues Cys144, Cys147, Cys157, and Cys160. Positions 341–345 (KMSKS) match the 'KMSKS' region motif. Residue Lys344 coordinates ATP. The disordered stretch occupies residues 562–587 (QVGAPTASQDDKAAAKNTSPAAMPSS). The segment covering 577–587 (KNTSPAAMPSS) has biased composition (polar residues). Residues 598–700 (DFAKVEMKVA…DEAVIGDSLA (103 aa)) enclose the tRNA-binding domain.

It belongs to the class-I aminoacyl-tRNA synthetase family. MetG type 1 subfamily. As to quaternary structure, homodimer. The cofactor is Zn(2+).

It is found in the cytoplasm. It catalyses the reaction tRNA(Met) + L-methionine + ATP = L-methionyl-tRNA(Met) + AMP + diphosphate. Is required not only for elongation of protein synthesis but also for the initiation of all mRNA translation through initiator tRNA(fMet) aminoacylation. In Psychrobacter cryohalolentis (strain ATCC BAA-1226 / DSM 17306 / VKM B-2378 / K5), this protein is Methionine--tRNA ligase.